Consider the following 315-residue polypeptide: tRNA uridine(34) hydroxylase (315 aa).

A Rhodanese domain is found at Ser136 to Ser230. The Cysteine persulfide intermediate role is filled by Cys190.

It belongs to the TrhO family.

The catalysed reaction is uridine(34) in tRNA + AH2 + O2 = 5-hydroxyuridine(34) in tRNA + A + H2O. In terms of biological role, catalyzes oxygen-dependent 5-hydroxyuridine (ho5U) modification at position 34 in tRNAs. This Sinorhizobium medicae (strain WSM419) (Ensifer medicae) protein is tRNA uridine(34) hydroxylase.